The following is a 429-amino-acid chain: Saccharopine dehydrogenase-like oxidoreductase (429 aa).

Residue A2 is modified to N-acetylalanine. S217 is modified (phosphoserine).

The protein belongs to the saccharopine dehydrogenase family.

The polypeptide is Saccharopine dehydrogenase-like oxidoreductase (SCCPDH) (Bos taurus (Bovine)).